A 283-amino-acid chain; its full sequence is Polyamine aminopropyltransferase (283 aa).

One can recognise a PABS domain in the interval 2-237 (ELWYTEEHTD…GHWLFGFASK (236 aa)). Gln-31 contributes to the S-methyl-5'-thioadenosine binding site. The spermidine site is built by His-62 and Asp-86. Residues Glu-106 and 137-138 (DG) each bind S-methyl-5'-thioadenosine. Asp-155 acts as the Proton acceptor in catalysis. 155–158 (DSTD) lines the spermidine pocket. S-methyl-5'-thioadenosine is bound at residue Pro-162.

The protein belongs to the spermidine/spermine synthase family. In terms of assembly, homodimer or homotetramer.

Its subcellular location is the cytoplasm. It catalyses the reaction S-adenosyl 3-(methylsulfanyl)propylamine + putrescine = S-methyl-5'-thioadenosine + spermidine + H(+). It functions in the pathway amine and polyamine biosynthesis; spermidine biosynthesis; spermidine from putrescine: step 1/1. Its function is as follows. Catalyzes the irreversible transfer of a propylamine group from the amino donor S-adenosylmethioninamine (decarboxy-AdoMet) to putrescine (1,4-diaminobutane) to yield spermidine. The chain is Polyamine aminopropyltransferase from Clostridium perfringens (strain ATCC 13124 / DSM 756 / JCM 1290 / NCIMB 6125 / NCTC 8237 / Type A).